The sequence spans 244 residues: NAD(P)H-quinone oxidoreductase subunit K (244 aa).

Residues Cys60, Cys61, Cys125, and Cys156 each contribute to the [4Fe-4S] cluster site. A disordered region spans residues 213-244 (TSANSIPSSKKEKITELPDNNEKAEIIDTLEN). The segment covering 221 to 238 (SKKEKITELPDNNEKAEI) has biased composition (basic and acidic residues).

This sequence belongs to the complex I 20 kDa subunit family. As to quaternary structure, NDH-1 can be composed of about 15 different subunits; different subcomplexes with different compositions have been identified which probably have different functions. [4Fe-4S] cluster serves as cofactor.

The protein localises to the cellular thylakoid membrane. It carries out the reaction a plastoquinone + NADH + (n+1) H(+)(in) = a plastoquinol + NAD(+) + n H(+)(out). The enzyme catalyses a plastoquinone + NADPH + (n+1) H(+)(in) = a plastoquinol + NADP(+) + n H(+)(out). NDH-1 shuttles electrons from an unknown electron donor, via FMN and iron-sulfur (Fe-S) centers, to quinones in the respiratory and/or the photosynthetic chain. The immediate electron acceptor for the enzyme in this species is believed to be plastoquinone. Couples the redox reaction to proton translocation, and thus conserves the redox energy in a proton gradient. Cyanobacterial NDH-1 also plays a role in inorganic carbon-concentration. This Prochlorococcus marinus (strain MIT 9301) protein is NAD(P)H-quinone oxidoreductase subunit K.